The chain runs to 444 residues: tRNA modification GTPase MnmE (444 aa).

3 residues coordinate (6S)-5-formyl-5,6,7,8-tetrahydrofolate: Arg28, Glu86, and Arg126. The 145-residue stretch at 224–368 (GFCVVLAGAP…LLDAIQGSAA (145 aa)) folds into the TrmE-type G domain. Asn234 serves as a coordination point for K(+). Residues 234–239 (NAGKST), 253–259 (SDIPGTT), and 278–281 (DTAG) each bind GTP. Ser238 contacts Mg(2+). Residues Ser253, Ile255, and Thr258 each coordinate K(+). Position 259 (Thr259) interacts with Mg(2+). (6S)-5-formyl-5,6,7,8-tetrahydrofolate is bound at residue Lys444.

This sequence belongs to the TRAFAC class TrmE-Era-EngA-EngB-Septin-like GTPase superfamily. TrmE GTPase family. Homodimer. Heterotetramer of two MnmE and two MnmG subunits. Requires K(+) as cofactor.

It is found in the cytoplasm. Exhibits a very high intrinsic GTPase hydrolysis rate. Involved in the addition of a carboxymethylaminomethyl (cmnm) group at the wobble position (U34) of certain tRNAs, forming tRNA-cmnm(5)s(2)U34. The chain is tRNA modification GTPase MnmE from Methylorubrum populi (strain ATCC BAA-705 / NCIMB 13946 / BJ001) (Methylobacterium populi).